We begin with the raw amino-acid sequence, 390 residues long: NADH-dependent butanol dehydrogenase B (390 aa).

The protein belongs to the iron-containing alcohol dehydrogenase family. As to quaternary structure, homodimer.

Its pathway is alcohol metabolism; butanol biosynthesis. This chain is NADH-dependent butanol dehydrogenase B (bdhB), found in Clostridium acetobutylicum (strain ATCC 824 / DSM 792 / JCM 1419 / IAM 19013 / LMG 5710 / NBRC 13948 / NRRL B-527 / VKM B-1787 / 2291 / W).